An 88-amino-acid chain; its full sequence is Co-chaperonin GroES (88 aa).

It belongs to the GroES chaperonin family. In terms of assembly, heptamer of 7 subunits arranged in a ring. Interacts with the chaperonin GroEL.

The protein localises to the cytoplasm. Its function is as follows. Together with the chaperonin GroEL, plays an essential role in assisting protein folding. The GroEL-GroES system forms a nano-cage that allows encapsulation of the non-native substrate proteins and provides a physical environment optimized to promote and accelerate protein folding. GroES binds to the apical surface of the GroEL ring, thereby capping the opening of the GroEL channel. The chain is Co-chaperonin GroES from Treponema pallidum (strain Nichols).